The primary structure comprises 83 residues: Apolipoprotein C-I, basic form (83 aa).

The N-terminal stretch at 1–26 is a signal peptide; that stretch reads MRLFLSLPVLVVVLSMVLEGPAPAQG.

The protein belongs to the apolipoprotein C1 family.

The protein resides in the secreted. Its function is as follows. Inhibitor of lipoprotein binding to the low density lipoprotein (LDL) receptor, LDL receptor-related protein, and very low density lipoprotein (VLDL) receptor. Associates with high density lipoproteins (HDL) and the triacylglycerol-rich lipoproteins in the plasma and makes up about 10% of the protein of the VLDL and 2% of that of HDL. Appears to interfere directly with fatty acid uptake and is also the major plasma inhibitor of cholesteryl ester transfer protein (CETP). Binds free fatty acids and reduces their intracellular esterification. Modulates the interaction of APOE with beta-migrating VLDL and inhibits binding of beta-VLDL to the LDL receptor-related protein. This chain is Apolipoprotein C-I, basic form (APOC1B), found in Cercocebus atys (Sooty mangabey).